Consider the following 295-residue polypeptide: Protoheme IX farnesyltransferase (295 aa).

Residues 1 to 9 (MSVKHFIQI) lie on the Cytoplasmic side of the membrane. A helical membrane pass occupies residues 10-28 (TKPGIIFGNVLSVAGGFFL). Residues 29–37 (ASKGHVDFA) are Periplasmic-facing. A helical membrane pass occupies residues 38-56 (LFLAVVIGTSLVVASGCVF). The Cytoplasmic portion of the chain corresponds to 57-78 (NNCIDRDIDHKMERTKNRVMVQ). The helical transmembrane segment at 79–97 (GGMSLPLALIYATLLGVAG) threads the bilayer. At 98 to 107 (FSLLYVQANP) the chain is on the periplasmic side. A helical membrane pass occupies residues 108-126 (LSAFCALIGFIVYVGFYSL). Topologically, residues 127–197 (WLKRKSVHGT…YSAANIPVLP (71 aa)) are cytoplasmic. The helical transmembrane segment at 198–216 (VARGILAAKKQIVLYVLAF) threads the bilayer. Topologically, residues 217 to 228 (VLATLMLTLGGY) are periplasmic. Residues 229–247 (AGLGYLAVAAAMGLYWLYM) traverse the membrane as a helical segment. Residues 248–268 (AWGGYKAEDDSKWARKVFGFS) are Cytoplasmic-facing. A helical transmembrane segment spans residues 269-287 (ILTVTALSVMMGVDSQTAA). The Periplasmic portion of the chain corresponds to 288 to 295 (DVLMTYAR).

The protein belongs to the UbiA prenyltransferase family. The cofactor is Mg(2+). Ca(2+) serves as cofactor.

It localises to the cell inner membrane. The catalysed reaction is heme b + (2E,6E)-farnesyl diphosphate + H2O = Fe(II)-heme o + diphosphate. In terms of biological role, converts protoheme IX and farnesyl diphosphate to heme O. This is Protoheme IX farnesyltransferase (cyoE) from Pseudomonas putida (Arthrobacter siderocapsulatus).